The primary structure comprises 389 residues: Large envelope protein (389 aa).

Position 1 is an N-acetylmethionine (Met1). Gly2 carries the N-myristoyl glycine; by host lipid modification. Residues Gly2–Ala108 form a pre-S1 region. Residues Gly2–Asn163 are pre-S. Topologically, residues Gly2–Gly170 are virion surface; in external conformation. At Gly2–Arg242 the chain is on the intravirion; in internal conformation side. A disordered region spans residues Ile73–Pro99. The pre-S2 stretch occupies residues Met109–Asn163. A helical membrane pass occupies residues Phe171 to Ile191. Over Pro192 to Arg242 the chain is Intravirion; in external conformation. The helical transmembrane segment at Phe243–Tyr263 threads the bilayer. At Gln264–Ser337 the chain is on the virion surface side. A glycan (N-linked (GlcNAc...) asparagine; by host) is linked at Asn309. The helical transmembrane segment at Leu338 to Ile358 threads the bilayer. Over Trp359–Trp364 the chain is Intravirion. Residues Gly365–Val387 form a helical membrane-spanning segment. Residues Tyr388 to Ile389 lie on the Virion surface side of the membrane.

This sequence belongs to the orthohepadnavirus major surface antigen family. As to quaternary structure, in its internal form (Li-HBsAg), interacts with the capsid protein and with the isoform S. Interacts with host chaperone CANX. In terms of assembly, associates with host chaperone CANX through its pre-S2 N glycan; this association may be essential for isoform M proper secretion. Interacts with isoform L. Interacts with the antigens of satellite virus HDV (HDVAgs); this interaction is required for encapsidation of HDV genomic RNA. Isoform M is N-terminally acetylated by host at a ratio of 90%, and N-glycosylated by host at the pre-S2 region. Post-translationally, myristoylated.

The protein localises to the virion membrane. The large envelope protein exists in two topological conformations, one which is termed 'external' or Le-HBsAg and the other 'internal' or Li-HBsAg. In its external conformation the protein attaches the virus to cell receptors and thereby initiating infection. This interaction determines the species specificity and liver tropism. This attachment induces virion internalization predominantly through caveolin-mediated endocytosis. The large envelope protein also assures fusion between virion membrane and endosomal membrane. In its internal conformation the protein plays a role in virion morphogenesis and mediates the contact with the nucleocapsid like a matrix protein. Functionally, the middle envelope protein plays an important role in the budding of the virion. It is involved in the induction of budding in a nucleocapsid independent way. In this process the majority of envelope proteins bud to form subviral lipoprotein particles of 22 nm of diameter that do not contain a nucleocapsid. The chain is Large envelope protein from Gorilla gorilla (western gorilla).